A 755-amino-acid chain; its full sequence is MTERQIYTVSAEIAGRTLTLEAGRFAEQADGAVVARYGDTMLLATVVCAKEAREGTDFFPLTVDYEEKMYAVGKIPANFFKREGRPTTTAILISRLTDRPLRPLFPKGFYNEVQVIITTFSIDMENDPGPLAIIAASAALAISDIPFAGPVGAVQMGHLDGKLVVNPKMGEIEKSRLDLVVAGTKDAVLMVEAGAYELSEDEMLQAVIEGHAVCKQICELQEQLVQLCGKPKRPFTPPVVDTSLEEAISAWMGDRLRKAVRSPVKQEREAQTEALKAEVIAHFTADEPEEEIPNRTKEVSKAFEKLLKDEVRNAILDEGIRVDGRALDEIRPISIEVGVVPRVHGSALFTRGQTQVLTIATLGSPGDEQKVDDLGIETTKRYIHHYNFPPFSTGEIRRLGTPRRRDIGHGALAERSLYAVLPSEEEFPYTIRLVSEVLSSNGSSSMASVCGSSLSLMDAGVPIKAPVAGVAMGLITGEDGRWRVLTDIQGIEDALGDMDFKVAGTANGVTGLQMDIKTTGITYEIMRQAFAQARAGRLFILEKMNAVISAPRPELSIYAPRIMTIQIPVDKIGALIGPGGKTIRNICDTTGAQIDIEDDGRVFITAPDGEAAKKAISMIEGLTREAKVGDIFLGKVVSIKPFGAFVNILPGKDGMVHVSELDEKRVENVEDVVSLGDEINVMVIDIDRNTGKISLSRRAVLTGETPEARKAAGAAPRPRPREEQRGGREEPRSLREELRGPRRDGERPRPRRRDD.

Residues Asp-493 and Asp-499 each coordinate Mg(2+). The 60-residue stretch at 560–619 folds into the KH domain; that stretch reads PRIMTIQIPVDKIGALIGPGGKTIRNICDTTGAQIDIEDDGRVFITAPDGEAAKKAISMI. In terms of domain architecture, S1 motif spans 629–698; that stretch reads GDIFLGKVVS…NTGKISLSRR (70 aa). The disordered stretch occupies residues 704–755; sequence ETPEARKAAGAAPRPRPREEQRGGREEPRSLREELRGPRRDGERPRPRRRDD. Positions 719-755 are enriched in basic and acidic residues; that stretch reads RPREEQRGGREEPRSLREELRGPRRDGERPRPRRRDD.

This sequence belongs to the polyribonucleotide nucleotidyltransferase family. It depends on Mg(2+) as a cofactor.

The protein resides in the cytoplasm. The enzyme catalyses RNA(n+1) + phosphate = RNA(n) + a ribonucleoside 5'-diphosphate. Its function is as follows. Involved in mRNA degradation. Catalyzes the phosphorolysis of single-stranded polyribonucleotides processively in the 3'- to 5'-direction. This is Polyribonucleotide nucleotidyltransferase from Chloroflexus aggregans (strain MD-66 / DSM 9485).